We begin with the raw amino-acid sequence, 24 residues long: YTATRDNCCILDERFGSYCPTTCG.

As to quaternary structure, heterohexamer; disulfide linked. Contains 2 sets of 3 non-identical chains (alpha, beta and gamma). The 2 heterotrimers are in head to head conformation with the N-termini in a small central domain. Conversion of fibrinogen to fibrin is triggered by thrombin, which cleaves fibrinopeptides A and B from alpha and beta chains, and thus exposes the N-terminal polymerization sites responsible for the formation of the soft clot. The soft clot is converted into the hard clot by factor XIIIA which catalyzes the epsilon-(gamma-glutamyl)lysine cross-linking between gamma chains (stronger) and between alpha chains (weaker) of different monomers.

Its subcellular location is the secreted. Its function is as follows. Together with fibrinogen alpha (FGA) and fibrinogen beta (FGB), polymerizes to form an insoluble fibrin matrix. Has a major function in hemostasis as one of the primary components of blood clots. In addition, functions during the early stages of wound repair to stabilize the lesion and guide cell migration during re-epithelialization. Was originally thought to be essential for platelet aggregation, based on in vitro studies using anticoagulated blood. However, subsequent studies have shown that it is not absolutely required for thrombus formation in vivo. Enhances expression of SELP in activated platelets via an ITGB3-dependent pathway. Maternal fibrinogen is essential for successful pregnancy. Fibrin deposition is also associated with infection, where it protects against IFNG-mediated hemorrhage. May also facilitate the antibacterial immune response via both innate and T-cell mediated pathways. The sequence is that of Fibrinogen gamma chain (FGG) from Canis lupus familiaris (Dog).